A 318-amino-acid polypeptide reads, in one-letter code: Protein-methionine-sulfoxide reductase catalytic subunit MsrP (318 aa).

Residues 1–40 (MNRFTRYDVTPEAIFNQRRQIIKAMGLGAAALSLPNIGFA) constitute a signal peptide (tat-type signal). Mo-molybdopterin contacts are provided by residues Asn-72, 75-76 (YE), Cys-130, Thr-165, Asn-217, Arg-222, and 233-235 (SIK).

It belongs to the MsrP family. Heterodimer of a catalytic subunit (MsrP) and a heme-binding subunit (MsrQ). The cofactor is Mo-molybdopterin. Predicted to be exported by the Tat system. The position of the signal peptide cleavage has not been experimentally proven.

It localises to the periplasm. The enzyme catalyses L-methionyl-[protein] + a quinone + H2O = L-methionyl-(S)-S-oxide-[protein] + a quinol. It carries out the reaction L-methionyl-[protein] + a quinone + H2O = L-methionyl-(R)-S-oxide-[protein] + a quinol. In terms of biological role, part of the MsrPQ system that repairs oxidized periplasmic proteins containing methionine sulfoxide residues (Met-O), using respiratory chain electrons. Thus protects these proteins from oxidative-stress damage caused by reactive species of oxygen and chlorine generated by the host defense mechanisms. MsrPQ is essential for the maintenance of envelope integrity under bleach stress, rescuing a wide series of structurally unrelated periplasmic proteins from methionine oxidation. The catalytic subunit MsrP is non-stereospecific, being able to reduce both (R-) and (S-) diastereoisomers of methionine sulfoxide. In Actinobacillus pleuropneumoniae serotype 5b (strain L20), this protein is Protein-methionine-sulfoxide reductase catalytic subunit MsrP.